The following is a 156-amino-acid chain: ATP synthase subunit b (156 aa).

Residues 7-27 traverse the membrane as a helical segment; it reads LIGQLIAFAIFVAFCMKFVWP.

The protein belongs to the ATPase B chain family. As to quaternary structure, F-type ATPases have 2 components, F(1) - the catalytic core - and F(0) - the membrane proton channel. F(1) has five subunits: alpha(3), beta(3), gamma(1), delta(1), epsilon(1). F(0) has three main subunits: a(1), b(2) and c(10-14). The alpha and beta chains form an alternating ring which encloses part of the gamma chain. F(1) is attached to F(0) by a central stalk formed by the gamma and epsilon chains, while a peripheral stalk is formed by the delta and b chains.

The protein localises to the cell inner membrane. Its function is as follows. F(1)F(0) ATP synthase produces ATP from ADP in the presence of a proton or sodium gradient. F-type ATPases consist of two structural domains, F(1) containing the extramembraneous catalytic core and F(0) containing the membrane proton channel, linked together by a central stalk and a peripheral stalk. During catalysis, ATP synthesis in the catalytic domain of F(1) is coupled via a rotary mechanism of the central stalk subunits to proton translocation. In terms of biological role, component of the F(0) channel, it forms part of the peripheral stalk, linking F(1) to F(0). In Pasteurella multocida (strain Pm70), this protein is ATP synthase subunit b.